The sequence spans 229 residues: MRRNIFCLACLWIVQACLSLDRADILYNIRQTSRPDVIPTQRDRPVAVSVSLKFINILEVNEITNEVDVVFWQQTTWSDRTLAWNSSHSPDQVSVPISSLWVPDLAAYNAISKPEVLTPQLARVVSDGEVLYMPSIRQRFSCDVSGVDTESGATCRIKIGSWTHHSREISVDPTTENSDDSEYFSQYSRFEILDVTQKKNSVTYSCCPEAYEDVEVSLNFRKKGRSEIL.

The first 19 residues, 1–19 (MRRNIFCLACLWIVQACLS), serve as a signal peptide directing secretion. Asparagine 85 is a glycosylation site (N-linked (GlcNAc...) asparagine). The Ig-like domain maps to 114 to 217 (PEVLTPQLAR…PEAYEDVEVS (104 aa)). Cysteines 142 and 155 form a disulfide.

In terms of assembly, homopentamer. In terms of processing, N-glycosylated. In terms of tissue distribution, expressed by glial cells.

It localises to the synaptic cleft. Its function is as follows. Binds to acetylcholine. Modulates neuronal synaptic transmission. In Lymnaea stagnalis (Great pond snail), this protein is Acetylcholine-binding protein.